Here is a 60-residue protein sequence, read N- to C-terminus: Large ribosomal subunit protein uL30 (60 aa).

The protein belongs to the universal ribosomal protein uL30 family. In terms of assembly, part of the 50S ribosomal subunit.

The chain is Large ribosomal subunit protein uL30 from Pediococcus pentosaceus (strain ATCC 25745 / CCUG 21536 / LMG 10740 / 183-1w).